Reading from the N-terminus, the 186-residue chain is Imidazoleglycerol-phosphate dehydratase (186 aa).

Belongs to the imidazoleglycerol-phosphate dehydratase family.

It is found in the cytoplasm. It carries out the reaction D-erythro-1-(imidazol-4-yl)glycerol 3-phosphate = 3-(imidazol-4-yl)-2-oxopropyl phosphate + H2O. The protein operates within amino-acid biosynthesis; L-histidine biosynthesis; L-histidine from 5-phospho-alpha-D-ribose 1-diphosphate: step 6/9. In Dictyoglomus turgidum (strain DSM 6724 / Z-1310), this protein is Imidazoleglycerol-phosphate dehydratase.